We begin with the raw amino-acid sequence, 337 residues long: Trace amine-associated receptor 5 (337 aa).

Over methionine 1–tyrosine 38 the chain is Extracellular. N-linked (GlcNAc...) asparagine glycosylation occurs at asparagine 21. Cystine bridges form between cysteine 24–cysteine 188 and cysteine 99–cysteine 192. A helical membrane pass occupies residues leucine 39 to valine 59. Over serine 60–asparagine 70 the chain is Cytoplasmic. Residues phenylalanine 71 to serine 91 traverse the membrane as a helical segment. Topologically, residues threonine 92 to leucine 109 are extracellular. The helical transmembrane segment at histidine 110–isoleucine 130 threads the bilayer. At aspartate 131–tyrosine 154 the chain is on the cytoplasmic side. A helical membrane pass occupies residues isoleucine 155–valine 175. Residues glutamate 176–valine 189 form an extracellular Loop 2 (ECL2) region. Residues glutamate 176–asparagine 204 lie on the Extracellular side of the membrane. The helical transmembrane segment at phenylalanine 205 to valine 225 threads the bilayer. Residues alanine 226 to threonine 253 lie on the Cytoplasmic side of the membrane. Residues leucine 254 to valine 274 traverse the membrane as a helical segment. Residues aspartate 275 to proline 284 lie on the Extracellular side of the membrane. A helical transmembrane segment spans residues leucine 285 to phenylalanine 307. Residues serine 308 to aspartate 337 lie on the Cytoplasmic side of the membrane.

Belongs to the G-protein coupled receptor 1 family. In terms of tissue distribution, specifically expressed in neurons of the olfactory epithelium, to discrete glomeruli predominantly localized to a confined bulb region. Present in the dorsal area of the main olfactory epithelium. Also present in the limbic brain areas receiving projection from the olfactory system and involved in the regulation of emotions. Also expressed in some brain regions outside the olfactory epithelium, such as the hippocampus, cerebellum, cortex, raphe nuclei, hypothalamus, and habenula.

Its subcellular location is the cell membrane. With respect to regulation, inhibited by 1-[(5,5- diphenyloxolan-2-yl)methyl]-4-(2-methoxyphenyl)piperazine and N-[(2,2-diphenyl-1,3-dioxolan-4-yl)methyl]-2-(2- methoxyphenoxy)ethan-1-amine small molecules. Olfactory receptor specific for trimethylamine, a trace amine enriched in the urine of male mice, playing a role in social behavior. Also activated by N-methylpiperidine. Trimethylamine is present at high concentration in the urine of male mice after puberty and acts as an attractant. Trimethylamine-binding causes a conformation change that triggers signaling via G(s)-class of G alpha proteins (GNAL or GNAS). Also required to provide olfactory input into limbic brain areas to regulate emotional behaviors likely via modulation of the serotonin system. The protein is Trace amine-associated receptor 5 of Mus musculus (Mouse).